Here is a 311-residue protein sequence, read N- to C-terminus: Malate dehydrogenase (311 aa).

Residues 10 to 15 (GAGRVG) and aspartate 35 each bind NAD(+). 2 residues coordinate substrate: arginine 84 and arginine 90. Residues asparagine 97 and 120–122 (VTN) contribute to the NAD(+) site. Substrate is bound by residues asparagine 122 and arginine 153. The active-site Proton acceptor is the histidine 177.

Belongs to the LDH/MDH superfamily. MDH type 3 family.

It carries out the reaction (S)-malate + NAD(+) = oxaloacetate + NADH + H(+). Its function is as follows. Catalyzes the reversible oxidation of malate to oxaloacetate. This is Malate dehydrogenase from Nitrosococcus oceani (strain ATCC 19707 / BCRC 17464 / JCM 30415 / NCIMB 11848 / C-107).